The primary structure comprises 259 residues: tRNA (guanine-N(7)-)-methyltransferase (259 aa).

Residues 1 to 74 (MGHHGQMHAQ…PAEDPDRPGP (74 aa)) form a disordered region. Residues glutamate 91, glutamate 116, asparagine 143, and aspartate 166 each coordinate S-adenosyl-L-methionine. The active site involves aspartate 166. Substrate is bound by residues lysine 170, aspartate 202, and 238 to 241 (TKYE).

It belongs to the class I-like SAM-binding methyltransferase superfamily. TrmB family.

The enzyme catalyses guanosine(46) in tRNA + S-adenosyl-L-methionine = N(7)-methylguanosine(46) in tRNA + S-adenosyl-L-homocysteine. The protein operates within tRNA modification; N(7)-methylguanine-tRNA biosynthesis. In terms of biological role, catalyzes the formation of N(7)-methylguanine at position 46 (m7G46) in tRNA. The sequence is that of tRNA (guanine-N(7)-)-methyltransferase from Mycobacterium avium (strain 104).